Reading from the N-terminus, the 486-residue chain is CUGBP Elav-like family member 4 (486 aa).

The tract at residues 1–298 (MYIKMATLAN…AAFAAAQMQQ (298 aa)) is sufficient for RNA-binding and MSE-dependent splicing activity. A compositionally biased stretch (polar residues) spans 18-28 (LSTNGLGSSPG). 2 disordered regions span residues 18–39 (LSTNGLGSSPGSAGHMNGLSHS) and 121–149 (LPGMNRPIQVKPADSESRGGSSCLRQPPS). The 82-residue stretch at 54–135 (IKLFIGQIPR…RPIQVKPADS (82 aa)) folds into the RRM 1 domain. Residues 138–149 (RGGSSCLRQPPS) are compositionally biased toward polar residues. An RRM 2 domain is found at 152-232 (RKLFVGMLNK…SSLVVKFADT (81 aa)). The segment at 239–258 (RRMQQMAGQMGMFNPMAIPF) is necessary for TNNT2 exon 5 inclusion. In terms of domain architecture, RRM 3 spans 404 to 479 (PQPPPMIPQQ…KRLKVQLKRP (76 aa)).

The protein belongs to the CELF/BRUNOL family. Ubiquitous. Strongly expressed in the cerebellum, hippocampus, amygdala, temporal and frontal cortex and frontal lobes.

The protein resides in the nucleus. The protein localises to the cytoplasm. In terms of biological role, RNA-binding protein implicated in the regulation of pre-mRNA alternative splicing. Mediates exon inclusion and/or exclusion in pre-mRNA that are subject to tissue-specific and developmentally regulated alternative splicing. Specifically activates exon 5 inclusion of cardiac isoforms of TNNT2 during heart remodeling at the juvenile to adult transition. Promotes exclusion of both the smooth muscle (SM) and non-muscle (NM) exons in actinin pre-mRNAs. Activates the splicing of MAPT/Tau exon 10. Binds to muscle-specific splicing enhancer (MSE) intronic sites flanking the alternative exon 5 of TNNT2 pre-mRNA. The chain is CUGBP Elav-like family member 4 (CELF4) from Homo sapiens (Human).